The sequence spans 381 residues: Magnesium transporter MRS2-I (381 aa).

The next 2 membrane-spanning stretches (helical) occupy residues 316–336 (LFLS…GIFG) and 353–373 (WVVL…VAYA). Positions 336-338 (GMN) match the Required for magnesium transport activity motif.

Belongs to the CorA metal ion transporter (MIT) (TC 1.A.35.5) family.

Its subcellular location is the membrane. Magnesium transporter that may mediate the influx of magnesium. In Oryza sativa subsp. indica (Rice), this protein is Magnesium transporter MRS2-I (MRS2-I).